The primary structure comprises 387 residues: Mannose-6-phosphate isomerase (387 aa).

It belongs to the N-acylglucosamine 2-epimerase family.

The enzyme catalyses D-mannose 6-phosphate = D-fructose 6-phosphate. The chain is Mannose-6-phosphate isomerase (pmi) from Rhizobium meliloti (strain 1021) (Ensifer meliloti).